A 144-amino-acid polypeptide reads, in one-letter code: Bacilliredoxin BT9727_3899 (144 aa).

This sequence belongs to the bacilliredoxin family.

The sequence is that of Bacilliredoxin BT9727_3899 from Bacillus thuringiensis subsp. konkukian (strain 97-27).